A 311-amino-acid polypeptide reads, in one-letter code: Ribosomal RNA small subunit methyltransferase H (311 aa).

S-adenosyl-L-methionine is bound by residues 32–34, Asp-52, Phe-79, Asp-100, and Gln-107; that span reads AGH.

This sequence belongs to the methyltransferase superfamily. RsmH family.

The protein resides in the cytoplasm. It carries out the reaction cytidine(1402) in 16S rRNA + S-adenosyl-L-methionine = N(4)-methylcytidine(1402) in 16S rRNA + S-adenosyl-L-homocysteine + H(+). Functionally, specifically methylates the N4 position of cytidine in position 1402 (C1402) of 16S rRNA. In Staphylococcus aureus (strain bovine RF122 / ET3-1), this protein is Ribosomal RNA small subunit methyltransferase H.